Consider the following 921-residue polypeptide: MLSIARKIFGTVNDRKLKPLQARVNRINALEPIMEALSDQSLKGKTAEFRKRLADGATLDSLLEEAFAVVREAAKRVNNMRHFDVQLMGGMILHSGAIAEMRTGEGKTLVATLAAYLNALEGKGVHVITVNDYLARRDADWMGRIYGALGMSTGVIVHGVSDEQRKAGYAADITYGTNNEFGFDYLRDNMKYSLDQMAQRGHHYAIVDEVDSILIDEARTPLIISGPTDDRSELYMAVDALIPRLEDSDFELDEKQRSVVFTETGSEKMEEWLTEAGVLEGSLWEPSNISLVHHSNQALRAHKLYARDKDYIVKDDSVMLIDEFSGRMMEGRRLSEGLHQAIEAKERVDIKPENQTLASITFQNYFRLYKKLAGMTGTALTEASEFADIYKLEVVDLPTNRPVRRLDEDDVVYRTAKAKYNEIIKEVRAANAKAQPILLGTASIEKSELLSHLLTAQRIPHKVLNARHHEQEAFIVAEAGVPGAVTVATNMAGRGTDIQLGGNFDMRLENERAAKEKALGRELSEGETSLLGAQIRADIEVKKKQALDAGGLYVLGTERHESRRIDNQLRGRTGRQGDPGKSKFYISIEDDLMRIFAADRMDAVMRRLGIKEDEGITHPWMNKAMETSQKKIEERNFEIRKNVLKYDDVINDQRKAIFEQRMEFLRSDDVSDVIEEMRESVIEALVARTMPEKAYAEQWDITGLEESLKTDLALDLPVREWAAEEGVANEEIAGRIREAVEGQYAELTRLIGEPQMRRIEKQFLLQVLDMRWREHLQQIDQLRSVIHLRSYGQRDPLNEFKREAFNLFDTLLGELRATVTRSLMHIRVQQAPQQQPQQVAPPPRPQPPQPAPQPPQQIRETKLDPDTGVNEMNPADKTQPPGPALHQAEDDWTNTPRNSACPCGSGKKYKHCHGAIETQKA.

ATP contacts are provided by residues glutamine 86, 104–108, and aspartate 497; that span reads GEGKT. Positions 829 to 838 are enriched in low complexity; it reads QQAPQQQPQQ. Residues 829-921 are disordered; it reads QQAPQQQPQQ…CHGAIETQKA (93 aa). The segment covering 839–855 has biased composition (pro residues); sequence VAPPPRPQPPQPAPQPP. Zn(2+)-binding residues include cysteine 901, cysteine 903, cysteine 912, and histidine 913.

It belongs to the SecA family. Monomer and homodimer. Part of the essential Sec protein translocation apparatus which comprises SecA, SecYEG and auxiliary proteins SecDF-YajC and YidC. Zn(2+) serves as cofactor.

It is found in the cell inner membrane. It localises to the cytoplasm. It catalyses the reaction ATP + H2O + cellular proteinSide 1 = ADP + phosphate + cellular proteinSide 2.. Functionally, part of the Sec protein translocase complex. Interacts with the SecYEG preprotein conducting channel. Has a central role in coupling the hydrolysis of ATP to the transfer of proteins into and across the cell membrane, serving both as a receptor for the preprotein-SecB complex and as an ATP-driven molecular motor driving the stepwise translocation of polypeptide chains across the membrane. The sequence is that of Protein translocase subunit SecA from Hyphomonas neptunium (strain ATCC 15444).